The sequence spans 465 residues: UDP-N-acetylmuramoylalanine--D-glutamate ligase (465 aa).

Residue 115–121 participates in ATP binding; sequence GTDGKTT.

The protein belongs to the MurCDEF family.

The protein resides in the cytoplasm. It carries out the reaction UDP-N-acetyl-alpha-D-muramoyl-L-alanine + D-glutamate + ATP = UDP-N-acetyl-alpha-D-muramoyl-L-alanyl-D-glutamate + ADP + phosphate + H(+). The protein operates within cell wall biogenesis; peptidoglycan biosynthesis. Cell wall formation. Catalyzes the addition of glutamate to the nucleotide precursor UDP-N-acetylmuramoyl-L-alanine (UMA). The sequence is that of UDP-N-acetylmuramoylalanine--D-glutamate ligase from Chlorobaculum tepidum (strain ATCC 49652 / DSM 12025 / NBRC 103806 / TLS) (Chlorobium tepidum).